Consider the following 557-residue polypeptide: Formate--tetrahydrofolate ligase 2 (557 aa).

66–73 (TPAGEGKT) contacts ATP.

The protein belongs to the formate--tetrahydrofolate ligase family.

It catalyses the reaction (6S)-5,6,7,8-tetrahydrofolate + formate + ATP = (6R)-10-formyltetrahydrofolate + ADP + phosphate. The protein operates within one-carbon metabolism; tetrahydrofolate interconversion. The polypeptide is Formate--tetrahydrofolate ligase 2 (Streptococcus pyogenes serotype M18 (strain MGAS8232)).